We begin with the raw amino-acid sequence, 310 residues long: tRNA dimethylallyltransferase (310 aa).

5 to 12 lines the ATP pocket; it reads GPTASGKS. 7-12 lines the substrate pocket; it reads TASGKS. The interval 30–33 is interaction with substrate tRNA; it reads DSMQ.

The protein belongs to the IPP transferase family. Monomer. Mg(2+) serves as cofactor.

It catalyses the reaction adenosine(37) in tRNA + dimethylallyl diphosphate = N(6)-dimethylallyladenosine(37) in tRNA + diphosphate. Functionally, catalyzes the transfer of a dimethylallyl group onto the adenine at position 37 in tRNAs that read codons beginning with uridine, leading to the formation of N6-(dimethylallyl)adenosine (i(6)A). In Rhodopseudomonas palustris (strain HaA2), this protein is tRNA dimethylallyltransferase.